Consider the following 210-residue polypeptide: Putative O-methyltransferase MSMEG_5073/MSMEI_4947 (210 aa).

S-adenosyl-L-methionine-binding positions include Val37, Glu59, 61–62 (GT), Ser67, Asp85, and Val86. Asp133 lines the substrate pocket. Residue Asp135 participates in S-adenosyl-L-methionine binding.

This sequence belongs to the class I-like SAM-binding methyltransferase superfamily. Cation-dependent O-methyltransferase family.

This is Putative O-methyltransferase MSMEG_5073/MSMEI_4947 from Mycolicibacterium smegmatis (strain ATCC 700084 / mc(2)155) (Mycobacterium smegmatis).